The following is a 93-amino-acid chain: UPF0728 protein C10orf53 homolog (93 aa).

This sequence belongs to the UPF0728 family.

The sequence is that of UPF0728 protein C10orf53 homolog from Mus musculus (Mouse).